We begin with the raw amino-acid sequence, 286 residues long: Pantothenate synthetase (286 aa).

M30 to H37 provides a ligand contact to ATP. Catalysis depends on H37, which acts as the Proton donor. Q61 lines the (R)-pantoate pocket. Beta-alanine is bound at residue Q61. Position 148-151 (G148–D151) interacts with ATP. Q154 contacts (R)-pantoate. Residues V177 and L185 to R188 each bind ATP.

This sequence belongs to the pantothenate synthetase family. In terms of assembly, homodimer.

It localises to the cytoplasm. The catalysed reaction is (R)-pantoate + beta-alanine + ATP = (R)-pantothenate + AMP + diphosphate + H(+). The protein operates within cofactor biosynthesis; (R)-pantothenate biosynthesis; (R)-pantothenate from (R)-pantoate and beta-alanine: step 1/1. In terms of biological role, catalyzes the condensation of pantoate with beta-alanine in an ATP-dependent reaction via a pantoyl-adenylate intermediate. The chain is Pantothenate synthetase from Psychrobacter sp. (strain PRwf-1).